The primary structure comprises 348 residues: MKIIQEIPEKNIIKVMPENLDDLWHLSHIVQAYNAVYSVTERRTEDKGDKLRADRGTKRRVFLGIKVEKVSFHEEVNRLRVSGKIIHAPEDIPIGSYHTLDIEPFTQISIQKNWKKWDLTRLKEAEESGKRPKVVVVILDDSEADIFTVRDFGVKELASIKSGVSKRIDSKQNEQAKYLYYNEIITTLSEFDGKILFAGPGFSKNNIQNYISEKHKDLASKIVIESTNHTGRLGLSEILKSGIIDRIYGEARLSKESQIIEKLLEEISKKRLASYGLNSVKNSINYSAVETLLITDEFLRRNRSTVEEMVNSVENSGGKFVVISTEHDSGRQLKALGGISALLRFPVE.

It belongs to the eukaryotic release factor 1 family. Pelota subfamily. In terms of assembly, monomer. It depends on a divalent metal cation as a cofactor.

It is found in the cytoplasm. In terms of biological role, may function in recognizing stalled ribosomes, interact with stem-loop structures in stalled mRNA molecules, and effect endonucleolytic cleavage of the mRNA. May play a role in the release non-functional ribosomes and degradation of damaged mRNAs. Has endoribonuclease activity. The protein is Protein pelota homolog of Methanococcus vannielii (strain ATCC 35089 / DSM 1224 / JCM 13029 / OCM 148 / SB).